A 422-amino-acid polypeptide reads, in one-letter code: Replication factor C large subunit (422 aa).

63 to 70 is an ATP binding site; it reads GPPGVGKT.

Belongs to the activator 1 small subunits family. RfcL subfamily. In terms of assembly, heteromultimer composed of small subunits (RfcS) and large subunits (RfcL).

Its function is as follows. Part of the RFC clamp loader complex which loads the PCNA sliding clamp onto DNA. This chain is Replication factor C large subunit, found in Pyrobaculum arsenaticum (strain DSM 13514 / JCM 11321 / PZ6).